The chain runs to 147 residues: Large ribosomal subunit protein uL13 (147 aa).

Belongs to the universal ribosomal protein uL13 family. As to quaternary structure, part of the 50S ribosomal subunit.

This protein is one of the early assembly proteins of the 50S ribosomal subunit, although it is not seen to bind rRNA by itself. It is important during the early stages of 50S assembly. This is Large ribosomal subunit protein uL13 from Leuconostoc mesenteroides subsp. mesenteroides (strain ATCC 8293 / DSM 20343 / BCRC 11652 / CCM 1803 / JCM 6124 / NCDO 523 / NBRC 100496 / NCIMB 8023 / NCTC 12954 / NRRL B-1118 / 37Y).